The primary structure comprises 359 residues: 3-dehydroquinate synthase (359 aa).

Residues 72-77 (EGEEHK), 106-110 (GVVGD), 130-131 (TT), lysine 143, lysine 152, and 170-173 (TLTT) contribute to the NAD(+) site. Zn(2+)-binding residues include glutamate 185, histidine 248, and histidine 265.

It belongs to the sugar phosphate cyclases superfamily. Dehydroquinate synthase family. Co(2+) is required as a cofactor. It depends on Zn(2+) as a cofactor. The cofactor is NAD(+).

The protein localises to the cytoplasm. It carries out the reaction 7-phospho-2-dehydro-3-deoxy-D-arabino-heptonate = 3-dehydroquinate + phosphate. It functions in the pathway metabolic intermediate biosynthesis; chorismate biosynthesis; chorismate from D-erythrose 4-phosphate and phosphoenolpyruvate: step 2/7. Its function is as follows. Catalyzes the conversion of 3-deoxy-D-arabino-heptulosonate 7-phosphate (DAHP) to dehydroquinate (DHQ). The sequence is that of 3-dehydroquinate synthase from Pelobacter propionicus (strain DSM 2379 / NBRC 103807 / OttBd1).